The chain runs to 192 residues: Ion-translocating oxidoreductase complex subunit B (192 aa).

Residues 1-26 (MNAIWIAVAAVSLLGLAFGAILGYAS) form a hydrophobic region. Positions 32 to 91 (EDDPVVEKIDEILPQSQCGQCGYPGCRPYAEAISCNGEKINRCAPGGEAVMLKIAELLNV) constitute a 4Fe-4S domain. Residues cysteine 49, cysteine 52, cysteine 57, cysteine 74, cysteine 117, cysteine 120, cysteine 123, cysteine 127, cysteine 147, cysteine 150, cysteine 153, and cysteine 157 each coordinate [4Fe-4S] cluster. 2 consecutive 4Fe-4S ferredoxin-type domains span residues 108–137 (MVAV…GATR) and 138–167 (AMHT…LQPV).

It belongs to the 4Fe4S bacterial-type ferredoxin family. RnfB subfamily. In terms of assembly, the complex is composed of six subunits: RsxA, RsxB, RsxC, RsxD, RsxE and RsxG. [4Fe-4S] cluster serves as cofactor.

It localises to the cell inner membrane. Part of a membrane-bound complex that couples electron transfer with translocation of ions across the membrane. Required to maintain the reduced state of SoxR. The polypeptide is Ion-translocating oxidoreductase complex subunit B (Shigella dysenteriae serotype 1 (strain Sd197)).